The chain runs to 251 residues: Diphthine synthase (251 aa).

Residues L9, D84, V87, 112 to 113 (SI), L160, A194, and H219 contribute to the S-adenosyl-L-methionine site.

This sequence belongs to the diphthine synthase family. As to quaternary structure, homodimer.

It catalyses the reaction 2-[(3S)-amino-3-carboxypropyl]-L-histidyl-[translation elongation factor 2] + 3 S-adenosyl-L-methionine = diphthine-[translation elongation factor 2] + 3 S-adenosyl-L-homocysteine + 3 H(+). It participates in protein modification; peptidyl-diphthamide biosynthesis. In terms of biological role, S-adenosyl-L-methionine-dependent methyltransferase that catalyzes the trimethylation of the amino group of the modified target histidine residue in translation elongation factor 2 (EF-2), to form an intermediate called diphthine. The three successive methylation reactions represent the second step of diphthamide biosynthesis. This is Diphthine synthase from Archaeoglobus fulgidus (strain ATCC 49558 / DSM 4304 / JCM 9628 / NBRC 100126 / VC-16).